Here is a 390-residue protein sequence, read N- to C-terminus: Leu/Ile/Val-binding protein homolog 6 (390 aa).

An N-terminal signal peptide occupies residues 1–21 (MKKIALTALAVFSLAASAAYA).

The protein belongs to the leucine-binding protein family.

Its function is as follows. Component of an amino-acid transport system. The sequence is that of Leu/Ile/Val-binding protein homolog 6 from Brucella suis biovar 1 (strain 1330).